A 363-amino-acid polypeptide reads, in one-letter code: Phosphoserine aminotransferase (363 aa).

Arg-42 contacts L-glutamate. Pyridoxal 5'-phosphate is bound by residues 76-77, Trp-102, Thr-156, Asp-175, and Gln-198; that span reads GR. Position 199 is an N6-(pyridoxal phosphate)lysine (Lys-199). 240 to 241 contacts pyridoxal 5'-phosphate; sequence NT.

This sequence belongs to the class-V pyridoxal-phosphate-dependent aminotransferase family. SerC subfamily. As to quaternary structure, homodimer. Pyridoxal 5'-phosphate serves as cofactor.

Its subcellular location is the cytoplasm. The catalysed reaction is O-phospho-L-serine + 2-oxoglutarate = 3-phosphooxypyruvate + L-glutamate. It catalyses the reaction 4-(phosphooxy)-L-threonine + 2-oxoglutarate = (R)-3-hydroxy-2-oxo-4-phosphooxybutanoate + L-glutamate. It functions in the pathway amino-acid biosynthesis; L-serine biosynthesis; L-serine from 3-phospho-D-glycerate: step 2/3. The protein operates within cofactor biosynthesis; pyridoxine 5'-phosphate biosynthesis; pyridoxine 5'-phosphate from D-erythrose 4-phosphate: step 3/5. Functionally, catalyzes the reversible conversion of 3-phosphohydroxypyruvate to phosphoserine and of 3-hydroxy-2-oxo-4-phosphonooxybutanoate to phosphohydroxythreonine. This Shewanella baltica (strain OS195) protein is Phosphoserine aminotransferase.